Consider the following 217-residue polypeptide: uncharacterized protein (217 aa).

In terms of domain architecture, ABC transporter spans 14-217 (LAVNNLCIER…NELATEIISL (204 aa)). 46–53 (GEIGSGKT) contributes to the ATP binding site.

It belongs to the ABC transporter superfamily.

This is an uncharacterized protein from Haemophilus influenzae (strain ATCC 51907 / DSM 11121 / KW20 / Rd).